We begin with the raw amino-acid sequence, 375 residues long: uncharacterized protein (375 aa).

The segment at 54 to 78 is disordered; that stretch reads EGIPPPTQSQEPLKPQENISRPIHH.

This is an uncharacterized protein from Bos taurus (Bovine).